The chain runs to 124 residues: 14 kDa peptide of ubiquinol-cytochrome c2 oxidoreductase complex (124 aa).

The chain crosses the membrane as a helical span at residues 85 to 102; it reads LGGFASGALLALALAGIF.

It is found in the cell inner membrane. In terms of biological role, component of the ubiquinol-cytochrome c reductase complex (complex III or cytochrome b-c1 complex), which is a respiratory chain that generates an electrochemical potential coupled to ATP synthesis. The sequence is that of 14 kDa peptide of ubiquinol-cytochrome c2 oxidoreductase complex from Cereibacter sphaeroides (Rhodobacter sphaeroides).